Reading from the N-terminus, the 309-residue chain is Glutaminase (309 aa).

Substrate contacts are provided by serine 65, asparagine 117, glutamate 162, asparagine 169, tyrosine 193, tyrosine 245, and valine 263.

This sequence belongs to the glutaminase family. In terms of assembly, homotetramer.

The enzyme catalyses L-glutamine + H2O = L-glutamate + NH4(+). The polypeptide is Glutaminase (Shouchella clausii (strain KSM-K16) (Alkalihalobacillus clausii)).